We begin with the raw amino-acid sequence, 102 residues long: NADH-quinone oxidoreductase subunit K (102 aa).

Helical transmembrane passes span 6-26, 30-50, and 62-82; these read LEHG…GVMV, LLFM…AFVL, and VMFI…LAIV.

Belongs to the complex I subunit 4L family. In terms of assembly, NDH-1 is composed of 14 different subunits. Subunits NuoA, H, J, K, L, M, N constitute the membrane sector of the complex.

The protein resides in the cell inner membrane. The enzyme catalyses a quinone + NADH + 5 H(+)(in) = a quinol + NAD(+) + 4 H(+)(out). Its function is as follows. NDH-1 shuttles electrons from NADH, via FMN and iron-sulfur (Fe-S) centers, to quinones in the respiratory chain. The immediate electron acceptor for the enzyme in this species is believed to be ubiquinone. Couples the redox reaction to proton translocation (for every two electrons transferred, four hydrogen ions are translocated across the cytoplasmic membrane), and thus conserves the redox energy in a proton gradient. The sequence is that of NADH-quinone oxidoreductase subunit K from Acinetobacter baumannii (strain AB307-0294).